The following is a 152-amino-acid chain: Deoxyuridine 5'-triphosphate nucleotidohydrolase (152 aa).

Residues 71–73 (RSG), Asn-84, 88–90 (LID), and Met-98 contribute to the substrate site.

This sequence belongs to the dUTPase family. It depends on Mg(2+) as a cofactor.

The catalysed reaction is dUTP + H2O = dUMP + diphosphate + H(+). Its pathway is pyrimidine metabolism; dUMP biosynthesis; dUMP from dCTP (dUTP route): step 2/2. Functionally, this enzyme is involved in nucleotide metabolism: it produces dUMP, the immediate precursor of thymidine nucleotides and it decreases the intracellular concentration of dUTP so that uracil cannot be incorporated into DNA. In Shewanella denitrificans (strain OS217 / ATCC BAA-1090 / DSM 15013), this protein is Deoxyuridine 5'-triphosphate nucleotidohydrolase.